Consider the following 353-residue polypeptide: GTPase Obg (353 aa).

An Obg domain is found at 1 to 159 (MRFVDEVVIN…RVIRLELKLL (159 aa)). Residues 160–334 (ADVGLLGMPN…LCTAIMQELT (175 aa)) form the OBG-type G domain. GTP is bound by residues 166-173 (GMPNAGKS), 191-195 (FTTLH), 213-216 (DIPG), 284-287 (NKMD), and 315-317 (SAA). Mg(2+) contacts are provided by Ser-173 and Thr-193.

Belongs to the TRAFAC class OBG-HflX-like GTPase superfamily. OBG GTPase family. Monomer. It depends on Mg(2+) as a cofactor.

The protein resides in the cytoplasm. Functionally, an essential GTPase which binds GTP, GDP and possibly (p)ppGpp with moderate affinity, with high nucleotide exchange rates and a fairly low GTP hydrolysis rate. Plays a role in control of the cell cycle, stress response, ribosome biogenesis and in those bacteria that undergo differentiation, in morphogenesis control. In Dichelobacter nodosus (strain VCS1703A), this protein is GTPase Obg.